Here is a 148-residue protein sequence, read N- to C-terminus: Protoporphyrinogen IX oxidase (148 aa).

4 consecutive transmembrane segments (helical) span residues 7–27 (YFLWVKAFHVIAVISWMAALF), 58–78 (SFIASPAMGFTLITGILMLLI), 86–106 (GGWLHAKLALVVLLLAYHFYC), and 128–148 (FNEAPTILMILIVILVVVKPF). H15 contributes to the heme binding site. K92 is a heme binding site.

The protein belongs to the HemJ family. Homodimer. Requires heme b as cofactor.

Its subcellular location is the cell membrane. It catalyses the reaction protoporphyrinogen IX + 3 A = protoporphyrin IX + 3 AH2. It functions in the pathway porphyrin-containing compound metabolism; protoporphyrin-IX biosynthesis; protoporphyrin-IX from protoporphyrinogen-IX: step 1/1. Its function is as follows. Catalyzes the oxidation of protoporphyrinogen IX to protoporphyrin IX. Is involved in the biosynthesis of tetrapyrrole molecules like heme. Does not use oxygen or artificial electron acceptors such as menadione or benzoquinone. The protein is Protoporphyrinogen IX oxidase of Helicobacter pylori (strain ATCC 700392 / 26695) (Campylobacter pylori).